Here is a 243-residue protein sequence, read N- to C-terminus: Uridylate kinase (243 aa).

18–21 (KLGG) serves as a coordination point for ATP. Residue glycine 59 participates in UMP binding. The ATP site is built by glycine 60 and arginine 64. Residues aspartate 79 and 140 to 147 (MGMPYFST) contribute to the UMP site. Residues tyrosine 173 and aspartate 176 each contribute to the ATP site.

It belongs to the UMP kinase family. In terms of assembly, homohexamer.

Its subcellular location is the cytoplasm. It carries out the reaction UMP + ATP = UDP + ADP. Its pathway is pyrimidine metabolism; CTP biosynthesis via de novo pathway; UDP from UMP (UMPK route): step 1/1. Its activity is regulated as follows. Inhibited by UTP. Its function is as follows. Catalyzes the reversible phosphorylation of UMP to UDP. This is Uridylate kinase from Corynebacterium glutamicum (strain R).